The following is a 367-amino-acid chain: MDDKKNAPSSDKSKALAAALAQIEKQFGKGSVMRMEDGAVVEEVQVVSTGSLGLDIALGVGGLPRGRVVEIYGPESSGKTTLTLQTIAEMQKLGGTCAFIDAEHALDVTYAQKLGINLSDLLISQPDTGEQALEICDALVRSGGVDLIVIDSVAALTPRAEIEGDMGDSLPGLQARLMSQALRKLTGSINRTNTLVIFINQIRMKIGVMFGNPETTTGGNALKFYASVRLDIRRTGSIKSGDEVIGNETKVKVVKNKIAPPFKEAHFDILYGEGTSREGEILDLGSDAKIVEKSGAWYSYNGERIGQGKDNARNYLKERPDLAREIENKVRVSLGVPELGAIKSDEPVAKKASAKESKEAKELKEVE.

ATP is bound at residue 73–80; that stretch reads GPESSGKT. Positions 345-367 are disordered; it reads DEPVAKKASAKESKEAKELKEVE.

The protein belongs to the RecA family.

It is found in the cytoplasm. Functionally, can catalyze the hydrolysis of ATP in the presence of single-stranded DNA, the ATP-dependent uptake of single-stranded DNA by duplex DNA, and the ATP-dependent hybridization of homologous single-stranded DNAs. It interacts with LexA causing its activation and leading to its autocatalytic cleavage. This chain is Protein RecA, found in Janthinobacterium sp. (strain Marseille) (Minibacterium massiliensis).